A 200-amino-acid polypeptide reads, in one-letter code: Probable molybdenum cofactor guanylyltransferase (200 aa).

GTP-binding positions include 9-11 (LAG), Lys21, Asp69, and Asp100. Asp100 provides a ligand contact to Mg(2+).

The protein belongs to the MobA family. It depends on Mg(2+) as a cofactor.

It is found in the cytoplasm. The catalysed reaction is Mo-molybdopterin + GTP + H(+) = Mo-molybdopterin guanine dinucleotide + diphosphate. Functionally, transfers a GMP moiety from GTP to Mo-molybdopterin (Mo-MPT) cofactor (Moco or molybdenum cofactor) to form Mo-molybdopterin guanine dinucleotide (Mo-MGD) cofactor. The polypeptide is Probable molybdenum cofactor guanylyltransferase (Bacillus cereus (strain B4264)).